Here is a 219-residue protein sequence, read N- to C-terminus: Large ribosomal subunit protein bL25 (219 aa).

Positions 176–219 (VTVVPPTDEPSEEEVEAMEGESATEEPEVVGEDKEDDEEENKED) are disordered. The span at 184–219 (EPSEEEVEAMEGESATEEPEVVGEDKEDDEEENKED) shows a compositional bias: acidic residues.

This sequence belongs to the bacterial ribosomal protein bL25 family. CTC subfamily. In terms of assembly, part of the 50S ribosomal subunit; part of the 5S rRNA/L5/L18/L25 subcomplex. Contacts the 5S rRNA. Binds to the 5S rRNA independently of L5 and L18.

Its function is as follows. This is one of the proteins that binds to the 5S RNA in the ribosome where it forms part of the central protuberance. This chain is Large ribosomal subunit protein bL25, found in Staphylococcus epidermidis (strain ATCC 35984 / DSM 28319 / BCRC 17069 / CCUG 31568 / BM 3577 / RP62A).